Consider the following 295-residue polypeptide: Protease HtpX (295 aa).

Transmembrane regions (helical) follow at residues 4–24 and 42–62; these read IFLFLATNLAIIVVLSIVLRL and ALLIFAAVFGFGGSFISLAIS. Histidine 147 provides a ligand contact to Zn(2+). Glutamate 148 is an active-site residue. Histidine 151 lines the Zn(2+) pocket. A run of 2 helical transmembrane segments spans residues 155–175 and 197–217; these read GDMVTLALIQGVVNTFVIFLA and FWITTIVAEIVFAILASIIVM. Glutamate 224 is a binding site for Zn(2+).

This sequence belongs to the peptidase M48B family. The cofactor is Zn(2+).

Its subcellular location is the cell inner membrane. The sequence is that of Protease HtpX from Thioalkalivibrio sulfidiphilus (strain HL-EbGR7).